A 348-amino-acid polypeptide reads, in one-letter code: Protein RecA (348 aa).

67 to 74 (GPESSGKT) serves as a coordination point for ATP.

It belongs to the RecA family.

It is found in the cytoplasm. Its function is as follows. Can catalyze the hydrolysis of ATP in the presence of single-stranded DNA, the ATP-dependent uptake of single-stranded DNA by duplex DNA, and the ATP-dependent hybridization of homologous single-stranded DNAs. It interacts with LexA causing its activation and leading to its autocatalytic cleavage. The protein is Protein RecA of Kineococcus radiotolerans (strain ATCC BAA-149 / DSM 14245 / SRS30216).